Consider the following 114-residue polypeptide: Cytochrome c2 (114 aa).

Gln1 bears the Pyrrolidone carboxylic acid mark. Residues Cys13, Cys16, His17, and Met93 each contribute to the heme c site.

This sequence belongs to the cytochrome c family. Binds 1 heme c group covalently per subunit.

In terms of biological role, cytochrome c2 is found mainly in purple, non-sulfur, photosynthetic bacteria where it functions as the electron donor to the oxidized bacteriochlorophyll in the photophosphorylation pathway. However, it may also have a role in the respiratory chain and is found in some non-photosynthetic bacteria. The protein is Cytochrome c2 (cycA) of Rhodopseudomonas palustris.